A 290-amino-acid chain; its full sequence is GTPase Era (290 aa).

The Era-type G domain maps to 2–167 (KSGFVSIVGR…LDELVKYLPE (166 aa)). Positions 10–17 (GRTNAGKS) are G1. 10-17 (GRTNAGKS) provides a ligand contact to GTP. The segment at 36–40 (NATRR) is G2. Residues 57–60 (DTPG) are G3. GTP is bound by residues 57–61 (DTPGL) and 116–119 (NKVD). Residues 116-119 (NKVD) form a G4 region. A G5 region spans residues 146-148 (YSI). Residues 194–274 (IYENLSDEIP…MLKLFVQLEK (81 aa)) form the KH type-2 domain.

This sequence belongs to the TRAFAC class TrmE-Era-EngA-EngB-Septin-like GTPase superfamily. Era GTPase family. In terms of assembly, monomer.

The protein localises to the cytoplasm. The protein resides in the cell inner membrane. An essential GTPase that binds both GDP and GTP, with rapid nucleotide exchange. Plays a role in 16S rRNA processing and 30S ribosomal subunit biogenesis and possibly also in cell cycle regulation and energy metabolism. This is GTPase Era from Campylobacter lari (strain RM2100 / D67 / ATCC BAA-1060).